Reading from the N-terminus, the 166-residue chain is NAD(P)H-quinone oxidoreductase subunit I, chloroplastic (166 aa).

2 consecutive 4Fe-4S ferredoxin-type domains span residues 55–84 (GRIH…VDWK) and 95–124 (LNYS…MTEE). 8 residues coordinate [4Fe-4S] cluster: Cys-64, Cys-67, Cys-70, Cys-74, Cys-104, Cys-107, Cys-110, and Cys-114.

Belongs to the complex I 23 kDa subunit family. NDH is composed of at least 16 different subunits, 5 of which are encoded in the nucleus. [4Fe-4S] cluster serves as cofactor.

The protein localises to the plastid. The protein resides in the chloroplast thylakoid membrane. It carries out the reaction a plastoquinone + NADH + (n+1) H(+)(in) = a plastoquinol + NAD(+) + n H(+)(out). The catalysed reaction is a plastoquinone + NADPH + (n+1) H(+)(in) = a plastoquinol + NADP(+) + n H(+)(out). In terms of biological role, NDH shuttles electrons from NAD(P)H:plastoquinone, via FMN and iron-sulfur (Fe-S) centers, to quinones in the photosynthetic chain and possibly in a chloroplast respiratory chain. The immediate electron acceptor for the enzyme in this species is believed to be plastoquinone. Couples the redox reaction to proton translocation, and thus conserves the redox energy in a proton gradient. The chain is NAD(P)H-quinone oxidoreductase subunit I, chloroplastic from Rensonia salvadorica.